The chain runs to 361 residues: sn-glycerol-3-phosphate import ATP-binding protein UgpC (361 aa).

The region spanning 4–235 (LSFRNLKKTY…PASTFVAGFI (232 aa)) is the ABC transporter domain. 37 to 44 (GPSGCGKS) is an ATP binding site.

This sequence belongs to the ABC transporter superfamily. sn-glycerol-3-phosphate importer (TC 3.A.1.1.3) family. The complex is composed of two ATP-binding proteins (UgpC), two transmembrane proteins (UgpA and UgpE) and a solute-binding protein (UgpB).

It localises to the cell inner membrane. The catalysed reaction is sn-glycerol 3-phosphate(out) + ATP + H2O = sn-glycerol 3-phosphate(in) + ADP + phosphate + H(+). Part of the ABC transporter complex UgpBAEC involved in sn-glycerol-3-phosphate (G3P) import. Responsible for energy coupling to the transport system. This chain is sn-glycerol-3-phosphate import ATP-binding protein UgpC, found in Bordetella avium (strain 197N).